Here is a 921-residue protein sequence, read N- to C-terminus: Collagen alpha-1(IX) chain (921 aa).

Positions 1-23 are cleaved as a signal peptide; that stretch reads MKTCWKIPVFFFVCSFLEPWASA. The segment at 24–268 is nonhelical region (NC4); it reads AVKRRPRFPV…ITPSQTTDER (245 aa). Disulfide bonds link C44-C242 and C198-C252. The region spanning 50-244 is the Laminin G-like domain; the sequence is GQDDLPGFDL…LQWMLIHCDP (195 aa). An N-linked (GlcNAc...) asparagine glycan is attached at N171. D213, D215, and H253 together coordinate Zn(2+). 2 disordered regions span residues 254–759 and 783–905; these read ELPA…APTD and RPDS…EPAS. Collagen-like domains lie at 269–324, 325–356, 358–403, 416–472, 473–516, 587–643, 655–712, and 713–755; these read GPPG…TPGA, DGLT…GFPG, GIPG…GTIG, PPGR…GLRG, ITGI…AGPK, EKGS…GKLG, GPPG…GEPG, and LRGP…PPGR. The triple-helical region (COL3) stretch occupies residues 269–405; the sequence is GPPGEQGPPG…PGPRGTIGFH (137 aa). 2 stretches are compositionally biased toward pro residues: residues 273–285 and 298–307; these read EQGP…PPGV and KGPPGPPGPA. Residues 368–383 show a composition bias toward low complexity; sequence TAGLPGELGRVGPVGD. Residues 387–398 show a composition bias toward pro residues; that stretch reads RGPPGPPGPPGP. Residues 406-417 are nonhelical region (NC3); that stretch reads DGDPLCPNACPP. The segment at 418 to 756 is triple-helical region (COL2); sequence GRSGYPGLPG…PGVQGPPGRA (339 aa). Residues 479-489 are compositionally biased toward basic and acidic residues; it reads DKGEKGARGLD. 2 stretches are compositionally biased toward low complexity: residues 602 to 621 and 630 to 650; these read NSGK…RGPQ and LGPV…SPGL. Residues 757–786 are nonhelical region (NC2); the sequence is PTDQHIKQVCMRVIQEHFAEMAASLKRPDS. The triple-helical region (COL1) stretch occupies residues 787-901; that stretch reads GATGLPGRPG…PGPPGLPGFC (115 aa). 2 Collagen-like domains span residues 790–847 and 848–899; these read GLPG…GPPG and RGPN…GLPG. A compositionally biased stretch (pro residues) spans 794–804; that stretch reads RPGPPGPPGPP. Residues 833–845 show a composition bias toward basic and acidic residues; sequence PKGDLGEKGERGP. Positions 888 to 897 are enriched in pro residues; the sequence is VPGPPGPPGL. The nonhelical region (NC1) stretch occupies residues 902–921; the sequence is EPASCTMQAGQRAFNKGPDP.

Belongs to the fibril-associated collagens with interrupted helices (FACIT) family. In terms of assembly, heterotrimer of an alpha 1(IX), an alpha 2(IX) and an alpha 3(IX) chain. In terms of processing, covalently linked to the telopeptides of type II collagen by lysine-derived cross-links. Prolines at the third position of the tripeptide repeating unit (G-X-Y) are hydroxylated in some or all of the chains.

The protein localises to the secreted. The protein resides in the extracellular space. Its subcellular location is the extracellular matrix. Functionally, structural component of hyaline cartilage and vitreous of the eye. The polypeptide is Collagen alpha-1(IX) chain (COL9A1) (Homo sapiens (Human)).